The chain runs to 396 residues: MTGFFTILSFSLAALSVTNAAQILSVPKGAEVVPNGYIVVMKDDTSQQDFSSHRVWISSIHHNMTRRGLDGAGVKQTYDFDHLRGYSGIFDEDTIKDISNDPKVAFVEPDAIISQHVVVQQRKAPWGLSRLSNRRGGRNYVFDSSAGSGVWAYVVDSGVDVRHSEFQGRAVWGSNLVDNKNSDGTGHGTHVAGTIAGKTYGIAKNAKVVAVKVLNSEGKGPTSGIIAGINWSIRHARKHGMLQKSVLNMSLGGTYSAGLNHATAQAIKAGMFVSVSAGNDNINSNGNSPASERSVCTIAASTENDGKASFSNWGPAVDLYAPGHNILSARPGGGSQTMSGTSMAAPHAAGVAAYLIAKEGIPGNRACLRLKQLSQPTIRNPGPDTTSRLLYNGSGR.

Residues 1-20 form the signal peptide; the sequence is MTGFFTILSFSLAALSVTNA. Positions 21-116 are excised as a propeptide; it reads AQILSVPKGA…VEPDAIISQH (96 aa). The Inhibitor I9 domain maps to 37-113; the sequence is YIVVMKDDTS…VAFVEPDAII (77 aa). Residues 125–396 form the Peptidase S8 domain; the sequence is PWGLSRLSNR…SRLLYNGSGR (272 aa). Catalysis depends on charge relay system residues Asp-156 and His-187. N-linked (GlcNAc...) asparagine glycosylation is found at Asn-230 and Asn-248. The active-site Charge relay system is Ser-342. The segment covering 376–389 has biased composition (polar residues); that stretch reads PTIRNPGPDTTSRL. A disordered region spans residues 376–396; sequence PTIRNPGPDTTSRLLYNGSGR. N-linked (GlcNAc...) asparagine glycosylation is present at Asn-392.

This sequence belongs to the peptidase S8 family.

It localises to the secreted. Functionally, secreted subtilisin-like serine protease with keratinolytic activity that contributes to pathogenicity. This Arthroderma benhamiae (strain ATCC MYA-4681 / CBS 112371) (Trichophyton mentagrophytes) protein is Subtilisin-like protease 5 (SUB5).